The primary structure comprises 81 residues: Styelin-E (81 aa).

The N-terminal stretch at 1 to 22 (MQMKATILIVLVALFMIQQSEA) is a signal peptide. At tryptophan 24 the chain carries 6'-bromotryptophan. Arginine 26 is subject to 3,4-dihydroxyarginine. 4,5-dihydroxylysine is present on residues lysine 27, lysine 30, and lysine 34. A 3',4'-dihydroxyphenylalanine mark is found at tyrosine 36 and tyrosine 37. Lysine 38 is modified (4,5-dihydroxylysine). 5-hydroxylysine is present on lysine 40. Tyrosine 41 and tyrosine 42 each carry 3',4'-dihydroxyphenylalanine. Lysine 44 bears the 5-hydroxylysine mark. At leucine 54 the chain carries Leucine amide. The propeptide at 56-81 (DMTDEEFQDFMKEVEQAREEELQSRQ) is removed in mature form.

In terms of processing, contains L-DOPA (3',4'-dihydroxyphenylalanine). Hemocytes and pharyngeal tissues.

Its subcellular location is the secreted. Its function is as follows. Bactericidal against several Gram-positive and Gram-negative bacteria. The polypeptide is Styelin-E (Styela clava (Sea squirt)).